Here is a 565-residue protein sequence, read N- to C-terminus: Oxygen-dependent choline dehydrogenase (565 aa).

D6–E35 is an FAD binding site. The segment at Q182–S201 is disordered. H475 (proton acceptor) is an active-site residue.

Belongs to the GMC oxidoreductase family. Requires FAD as cofactor.

The catalysed reaction is choline + A = betaine aldehyde + AH2. It catalyses the reaction betaine aldehyde + NAD(+) + H2O = glycine betaine + NADH + 2 H(+). It functions in the pathway amine and polyamine biosynthesis; betaine biosynthesis via choline pathway; betaine aldehyde from choline (cytochrome c reductase route): step 1/1. Its function is as follows. Involved in the biosynthesis of the osmoprotectant glycine betaine. Catalyzes the oxidation of choline to betaine aldehyde and betaine aldehyde to glycine betaine at the same rate. The sequence is that of Oxygen-dependent choline dehydrogenase from Pseudomonas putida (strain ATCC 47054 / DSM 6125 / CFBP 8728 / NCIMB 11950 / KT2440).